Reading from the N-terminus, the 377-residue chain is Phosphoserine aminotransferase (377 aa).

L-glutamate is bound at residue arginine 43. Positions 105, 164, 189, and 212 each coordinate pyridoxal 5'-phosphate. Lysine 213 carries the post-translational modification N6-(pyridoxal phosphate)lysine. 254–255 (NT) contributes to the pyridoxal 5'-phosphate binding site.

The protein belongs to the class-V pyridoxal-phosphate-dependent aminotransferase family. SerC subfamily. Homodimer. Pyridoxal 5'-phosphate is required as a cofactor.

It localises to the cytoplasm. It catalyses the reaction O-phospho-L-serine + 2-oxoglutarate = 3-phosphooxypyruvate + L-glutamate. It carries out the reaction 4-(phosphooxy)-L-threonine + 2-oxoglutarate = (R)-3-hydroxy-2-oxo-4-phosphooxybutanoate + L-glutamate. The protein operates within amino-acid biosynthesis; L-serine biosynthesis; L-serine from 3-phospho-D-glycerate: step 2/3. It participates in cofactor biosynthesis; pyridoxine 5'-phosphate biosynthesis; pyridoxine 5'-phosphate from D-erythrose 4-phosphate: step 3/5. In terms of biological role, catalyzes the reversible conversion of 3-phosphohydroxypyruvate to phosphoserine and of 3-hydroxy-2-oxo-4-phosphonooxybutanoate to phosphohydroxythreonine. The protein is Phosphoserine aminotransferase of Bordetella pertussis (strain Tohama I / ATCC BAA-589 / NCTC 13251).